The chain runs to 138 residues: Transcription antitermination protein NusB (138 aa).

The protein belongs to the NusB family.

Its function is as follows. Involved in transcription antitermination. Required for transcription of ribosomal RNA (rRNA) genes. Binds specifically to the boxA antiterminator sequence of the ribosomal RNA (rrn) operons. The chain is Transcription antitermination protein NusB from Serratia proteamaculans (strain 568).